We begin with the raw amino-acid sequence, 208 residues long: A-type ATP synthase subunit E (208 aa).

The protein belongs to the V-ATPase E subunit family. Has multiple subunits with at least A(3), B(3), C, D, E, F, H, I and proteolipid K(x).

It localises to the cell membrane. Its function is as follows. Component of the A-type ATP synthase that produces ATP from ADP in the presence of a proton gradient across the membrane. The chain is A-type ATP synthase subunit E from Ignicoccus hospitalis (strain KIN4/I / DSM 18386 / JCM 14125).